Reading from the N-terminus, the 296-residue chain is MKPPSFDYVVADSVEHALRLLADGGDDAKIIAGGQSLVPLLNFRMSRPSLLVDINRVPGLANIRKSDQTIAIGALTRHAKLTTSKTISQNLPILSEAAAWIAHPQIRNRGTIGGSLAHADAAAELPVVLLALDAYVTAQSLQGERKIPLKELLVSHFVSSILPGELIVEVNVPQLPHGSGAAFDEFSRRHGDYAIGGAASIVTLDEQGKCSRARITVLGGGSTAIRCQEAENILIDSTLSSHDIAAAAHAAVQGLDPVPTVHGSAQYRAQVIRTMVERTLAKALHRARPTKESMDH.

The FAD-binding PCMH-type domain occupies 1 to 177 (MKPPSFDYVV…VEVNVPQLPH (177 aa)). FAD-binding positions include 30 to 37 (IIAGGQSL), 111 to 115 (TIGGS), and glutamate 124.

In terms of assembly, heterohexamer of 2 alpha (kdhA), 2 beta (kdhB) and 2 gamma (kdhC) subunit. Dimer of heterotrimers. Requires FAD as cofactor.

The enzyme catalyses 6-hydroxypseudooxynicotine + A + H2O = 2,6-dihydroxypseudooxynicotine + AH2. It functions in the pathway alkaloid degradation; nicotine degradation. Molybdo-flavoprotein enzyme complex involved in nicotine degradation. The subunit gamma (large subunit) contains the substrate-binding sites, the subunit alpha (medium subunit) binds FAD and the subunit beta (small subunit) has a 2Fe-2S ferredoxin-type domain which binds 2 2Fe-2S clusters. The sequence is that of 6-hydroxypseudooxynicotine dehydrogenase complex subunit alpha (kdhA) from Paenarthrobacter nicotinovorans (Arthrobacter nicotinovorans).